Here is a 267-residue protein sequence, read N- to C-terminus: Thiamine pyrophosphokinase 2 (267 aa).

It belongs to the thiamine pyrophosphokinase family. Expressed in leaves and at lower levels in flowers.

The protein resides in the cytoplasm. The protein localises to the cytosol. The catalysed reaction is thiamine + ATP = thiamine diphosphate + AMP + H(+). It participates in cofactor biosynthesis; thiamine diphosphate biosynthesis; thiamine diphosphate from thiamine: step 1/1. Catalyzes the phosphorylation of thiamine to thiamine pyrophosphate (TPP). TPP is an active cofactor for enzymes involved in glycolysis and energy production. Plant leaves require high levels of TPP for photosynthesis and carbohydrate metabolism. In Arabidopsis thaliana (Mouse-ear cress), this protein is Thiamine pyrophosphokinase 2.